Reading from the N-terminus, the 209-residue chain is Potassium-transporting ATPase KdpC subunit (209 aa).

The chain crosses the membrane as a helical span at residues Ala18–Ile38.

Belongs to the KdpC family. In terms of assembly, the system is composed of three essential subunits: KdpA, KdpB and KdpC.

The protein localises to the cell inner membrane. In terms of biological role, part of the high-affinity ATP-driven potassium transport (or Kdp) system, which catalyzes the hydrolysis of ATP coupled with the electrogenic transport of potassium into the cytoplasm. This subunit acts as a catalytic chaperone that increases the ATP-binding affinity of the ATP-hydrolyzing subunit KdpB by the formation of a transient KdpB/KdpC/ATP ternary complex. This chain is Potassium-transporting ATPase KdpC subunit, found in Xanthomonas campestris pv. campestris (strain 8004).